Consider the following 690-residue polypeptide: Ras guanyl-releasing protein 3 (690 aa).

One can recognise an N-terminal Ras-GEF domain in the interval 3–125 (SSGLGKAATL…SLIDISSIPS (123 aa)). Positions 152–383 (EPIELAEHLT…YKLSLVLEPR (232 aa)) constitute a Ras-GEF domain. EF-hand domains lie at 420–455 (HIRK…FPFL) and 458–484 (FCVL…AKSQ). The Ca(2+) site is built by Asp433, Asp435, Asp437, Tyr439, Asp444, Asp462, Asp464, Asp466, and Glu473. A Phorbol-ester/DAG-type zinc finger spans residues 494–544 (IHNFQEMTYLKPTFCEHCAGFLWGIIKQGYKCKDCGANCHKQCKDLLVLAC). The interval 667 to 690 (VDRGTEFELDQDEGEETRQDGEDG) is disordered.

Belongs to the RASGRP family.

In terms of biological role, guanine nucleotide exchange factor (GEF) for Ras and Rap1. The sequence is that of Ras guanyl-releasing protein 3 (RASGRP3) from Homo sapiens (Human).